The chain runs to 432 residues: Enolase 2 (432 aa).

(2R)-2-phosphoglycerate is bound at residue Gln-163. The Proton donor role is filled by Glu-205. Positions 242, 287, and 314 each coordinate Mg(2+). Lys-339, Arg-368, Ser-369, and Lys-390 together coordinate (2R)-2-phosphoglycerate. Catalysis depends on Lys-339, which acts as the Proton acceptor.

Belongs to the enolase family. As to quaternary structure, homodimer. Probably forms octamers. Mg(2+) serves as cofactor.

Its subcellular location is the cytoplasm. It is found in the secreted. The protein resides in the cell surface. The catalysed reaction is (2R)-2-phosphoglycerate = phosphoenolpyruvate + H2O. Its pathway is carbohydrate degradation; glycolysis; pyruvate from D-glyceraldehyde 3-phosphate: step 4/5. Catalyzes the reversible conversion of 2-phosphoglycerate (2-PG) into phosphoenolpyruvate (PEP). It is essential for the degradation of carbohydrates via glycolysis. The polypeptide is Enolase 2 (Lactobacillus gasseri (strain ATCC 33323 / DSM 20243 / BCRC 14619 / CIP 102991 / JCM 1131 / KCTC 3163 / NCIMB 11718 / NCTC 13722 / AM63)).